Consider the following 73-residue polypeptide: Translation initiation factor IF-1 (73 aa).

The S1-like domain maps to 1–73; that stretch reads MAKKDGAIEV…TRGRIVYRYK (73 aa).

It belongs to the IF-1 family. As to quaternary structure, component of the 30S ribosomal translation pre-initiation complex which assembles on the 30S ribosome in the order IF-2 and IF-3, IF-1 and N-formylmethionyl-tRNA(fMet); mRNA recruitment can occur at any time during PIC assembly.

The protein localises to the cytoplasm. Functionally, one of the essential components for the initiation of protein synthesis. Stabilizes the binding of IF-2 and IF-3 on the 30S subunit to which N-formylmethionyl-tRNA(fMet) subsequently binds. Helps modulate mRNA selection, yielding the 30S pre-initiation complex (PIC). Upon addition of the 50S ribosomal subunit IF-1, IF-2 and IF-3 are released leaving the mature 70S translation initiation complex. This is Translation initiation factor IF-1 from Mycolicibacterium gilvum (strain PYR-GCK) (Mycobacterium gilvum (strain PYR-GCK)).